The primary structure comprises 394 residues: MNLGTPLKPGATRVLLLGSGELGKEVAIEAQRLGVEVIAVDRYADAPAMQVAHRSHVISMQDREELKRVIGLERPDLIVPEIEAIDTEFLLELEQGGQRVIPTARATNLTMNREGIRRLAAEELGLPTARYAFAASLEEMRGHVAQIGCPCVIKPIMSSSGKGQSVLRDPSQVDEAWRYAMEGARGASDTVIIEEFIQFDYEITLLTVRHCNGTSFCPPIGHVQIKGDYHESWQPMAMSPAALAEARRQAEAVTTALGGYGLFGVELFISNDRVLFSEVSPRPHDTGMVTMISQNLSQFELHVRAILGLPVGEIVNLAPSASHVILADASFDAVRFEGLEQALEVATSKLRLFGKPDTRPGRRMGVALVQGKDTDEARGRAEACAHAVRMVPLS.

N(1)-(5-phospho-beta-D-ribosyl)glycinamide is bound by residues 21–22 and glutamate 81; that span reads EL. Residues arginine 113, lysine 154, 159 to 164, 194 to 197, and glutamate 202 each bind ATP; these read SSGKGQ and EEFI. One can recognise an ATP-grasp domain in the interval 118–307; the sequence is RLAAEELGLP…QFELHVRAIL (190 aa). Positions 266 and 278 each coordinate Mg(2+). N(1)-(5-phospho-beta-D-ribosyl)glycinamide contacts are provided by residues aspartate 285, lysine 355, and 362–363; that span reads RR.

The protein belongs to the PurK/PurT family. Homodimer.

The catalysed reaction is N(1)-(5-phospho-beta-D-ribosyl)glycinamide + formate + ATP = N(2)-formyl-N(1)-(5-phospho-beta-D-ribosyl)glycinamide + ADP + phosphate + H(+). It functions in the pathway purine metabolism; IMP biosynthesis via de novo pathway; N(2)-formyl-N(1)-(5-phospho-D-ribosyl)glycinamide from N(1)-(5-phospho-D-ribosyl)glycinamide (formate route): step 1/1. Functionally, involved in the de novo purine biosynthesis. Catalyzes the transfer of formate to 5-phospho-ribosyl-glycinamide (GAR), producing 5-phospho-ribosyl-N-formylglycinamide (FGAR). Formate is provided by PurU via hydrolysis of 10-formyl-tetrahydrofolate. The sequence is that of Formate-dependent phosphoribosylglycinamide formyltransferase from Pelobacter propionicus (strain DSM 2379 / NBRC 103807 / OttBd1).